The following is a 538-amino-acid chain: Eukaryotic translation initiation factor 3 subunit L (538 aa).

Positions 305–513 constitute a PCI domain; it reads TFSDILLYIQ…IHIADTKVSH (209 aa).

This sequence belongs to the eIF-3 subunit L family. Component of the eukaryotic translation initiation factor 3 (eIF-3) complex. The eIF-3 complex interacts with pix.

It localises to the cytoplasm. In terms of biological role, component of the eukaryotic translation initiation factor 3 (eIF-3) complex, which is involved in protein synthesis of a specialized repertoire of mRNAs and, together with other initiation factors, stimulates binding of mRNA and methionyl-tRNAi to the 40S ribosome. The eIF-3 complex specifically targets and initiates translation of a subset of mRNAs involved in cell proliferation. The protein is Eukaryotic translation initiation factor 3 subunit L of Drosophila virilis (Fruit fly).